Consider the following 377-residue polypeptide: S-adenosylmethionine decarboxylase proenzyme 2 (377 aa).

Active-site residues include E24 and E27. S84 (schiff-base intermediate with substrate; via pyruvic acid) is an active-site residue. The residue at position 84 (S84) is a Pyruvic acid (Ser); by autocatalysis. C98 (proton donor; for catalytic activity) is an active-site residue. Residues S246 and H259 each act as proton acceptor; for processing activity in the active site.

This sequence belongs to the eukaryotic AdoMetDC family. Pyruvate serves as cofactor. Post-translationally, is synthesized initially as an inactive proenzyme. Formation of the active enzyme involves a self-maturation process in which the active site pyruvoyl group is generated from an internal serine residue via an autocatalytic post-translational modification. Two non-identical subunits are generated from the proenzyme in this reaction, and the pyruvate is formed at the N-terminus of the alpha chain, which is derived from the carboxyl end of the proenzyme. The post-translation cleavage follows an unusual pathway, termed non-hydrolytic serinolysis, in which the side chain hydroxyl group of the serine supplies its oxygen atom to form the C-terminus of the beta chain, while the remainder of the serine residue undergoes an oxidative deamination to produce ammonia and the pyruvoyl group blocking the N-terminus of the alpha chain.

The enzyme catalyses S-adenosyl-L-methionine + H(+) = S-adenosyl 3-(methylsulfanyl)propylamine + CO2. The protein operates within amine and polyamine biosynthesis; S-adenosylmethioninamine biosynthesis; S-adenosylmethioninamine from S-adenosyl-L-methionine: step 1/1. The chain is S-adenosylmethionine decarboxylase proenzyme 2 (SAMDC2) from Dianthus caryophyllus (Carnation).